A 489-amino-acid chain; its full sequence is Probable serine protease EDA2 (489 aa).

An N-terminal signal peptide occupies residues 1-25; the sequence is MSLEFGFILINIFTAIVSFSTLSHA. N-linked (GlcNAc...) asparagine glycosylation is found at asparagine 35, asparagine 51, and asparagine 162. The active-site Charge relay system is the serine 178. N-linked (GlcNAc...) asparagine glycosylation is found at asparagine 253, asparagine 293, asparagine 365, and asparagine 406. Aspartate 410 functions as the Charge relay system in the catalytic mechanism. A glycan (N-linked (GlcNAc...) asparagine) is linked at asparagine 419. Histidine 436 acts as the Charge relay system in catalysis. Asparagine 456 is a glycosylation site (N-linked (GlcNAc...) asparagine).

The protein belongs to the peptidase S28 family.

The protein localises to the secreted. Its function is as follows. May be involved in a proteolytic pathway controlling the nuclear division phase of megagametogenesis. The polypeptide is Probable serine protease EDA2 (EDA2) (Arabidopsis thaliana (Mouse-ear cress)).